The following is a 239-amino-acid chain: Chlorate reductase subunit gamma (239 aa).

The signal sequence occupies residues 1 to 27 (MKTNILVKRMAVIGLAVAAACTGAAAA). Residues histidine 74 and methionine 138 each contribute to the heme b site.

In terms of assembly, heterotrimer of alpha, beta and gamma subunits. Heme b is required as a cofactor.

Its subcellular location is the periplasm. Functionally, may transfer electrons to the iron-sulfur centers of ClrB. The polypeptide is Chlorate reductase subunit gamma (clrC) (Ideonella dechloratans).